A 73-amino-acid chain; its full sequence is Large ribosomal subunit protein bL31 (73 aa).

Positions 16, 18, 37, and 40 each coordinate Zn(2+).

It belongs to the bacterial ribosomal protein bL31 family. Type A subfamily. In terms of assembly, part of the 50S ribosomal subunit. Zn(2+) is required as a cofactor.

In terms of biological role, binds the 23S rRNA. The chain is Large ribosomal subunit protein bL31 from Blochmanniella floridana.